We begin with the raw amino-acid sequence, 389 residues long: Leucine aminopeptidase 1 (389 aa).

The first 19 residues, 1-19 (MKLPALLTLGVAASTMVLA), serve as a signal peptide directing secretion. A propeptide spanning residues 20-88 (AIAPDQVPLN…LPKVFPTPAV (69 aa)) is cleaved from the precursor. Asn-96, Asn-119, Asn-149, Asn-164, and Asn-181 each carry an N-linked (GlcNAc...) asparagine glycan. 2 residues coordinate Zn(2+): His-189 and Asp-208. A glycan (N-linked (GlcNAc...) asparagine) is linked at Asn-233. Residues Glu-247 and Asp-274 each coordinate Zn(2+). Cys-323 and Cys-327 are oxidised to a cystine. His-356 contributes to the Zn(2+) binding site.

Belongs to the peptidase M28 family. M28E subfamily. Monomer. The cofactor is Zn(2+).

The protein localises to the secreted. In terms of biological role, extracellular aminopeptidase that allows assimilation of proteinaceous substrates. The polypeptide is Leucine aminopeptidase 1 (LAP1) (Paracoccidioides brasiliensis (strain Pb18)).